The sequence spans 171 residues: Large ribosomal subunit protein uL10 (171 aa).

This sequence belongs to the universal ribosomal protein uL10 family. As to quaternary structure, part of the ribosomal stalk of the 50S ribosomal subunit. The N-terminus interacts with L11 and the large rRNA to form the base of the stalk. The C-terminus forms an elongated spine to which L12 dimers bind in a sequential fashion forming a multimeric L10(L12)X complex.

In terms of biological role, forms part of the ribosomal stalk, playing a central role in the interaction of the ribosome with GTP-bound translation factors. This is Large ribosomal subunit protein uL10 from Phenylobacterium zucineum (strain HLK1).